Here is a 341-residue protein sequence, read N- to C-terminus: N-acetyl-gamma-glutamyl-phosphate reductase 2 (341 aa).

C146 is a catalytic residue.

The protein belongs to the NAGSA dehydrogenase family. Type 1 subfamily.

Its subcellular location is the cytoplasm. It catalyses the reaction N-acetyl-L-glutamate 5-semialdehyde + phosphate + NADP(+) = N-acetyl-L-glutamyl 5-phosphate + NADPH + H(+). The protein operates within amino-acid biosynthesis; L-arginine biosynthesis; N(2)-acetyl-L-ornithine from L-glutamate: step 3/4. In terms of biological role, catalyzes the NADPH-dependent reduction of N-acetyl-5-glutamyl phosphate to yield N-acetyl-L-glutamate 5-semialdehyde. This Lactiplantibacillus plantarum (strain ATCC BAA-793 / NCIMB 8826 / WCFS1) (Lactobacillus plantarum) protein is N-acetyl-gamma-glutamyl-phosphate reductase 2.